The primary structure comprises 727 residues: 1,4-alpha-glucan branching enzyme GlgB (727 aa).

Catalysis depends on aspartate 405, which acts as the Nucleophile. Glutamate 458 functions as the Proton donor in the catalytic mechanism.

This sequence belongs to the glycosyl hydrolase 13 family. GlgB subfamily. As to quaternary structure, monomer.

The enzyme catalyses Transfers a segment of a (1-&gt;4)-alpha-D-glucan chain to a primary hydroxy group in a similar glucan chain.. It participates in glycan biosynthesis; glycogen biosynthesis. Its function is as follows. Catalyzes the formation of the alpha-1,6-glucosidic linkages in glycogen by scission of a 1,4-alpha-linked oligosaccharide from growing alpha-1,4-glucan chains and the subsequent attachment of the oligosaccharide to the alpha-1,6 position. In Yersinia pestis bv. Antiqua (strain Antiqua), this protein is 1,4-alpha-glucan branching enzyme GlgB.